We begin with the raw amino-acid sequence, 196 residues long: S-norcoclaurine synthase 2 (196 aa).

The first 19 residues, 1–19 (MRMEVVLVVFLMFIGTINC), serve as a signal peptide directing secretion. 104 to 106 (YRE) lines the dopamine pocket. K118 functions as the Proton donor in the catalytic mechanism. D137 contacts (4-hydroxyphenyl)acetaldehyde.

This sequence belongs to the BetVI family.

It carries out the reaction (4-hydroxyphenyl)acetaldehyde + dopamine = (S)-norcoclaurine + H2O. Its activity is regulated as follows. Not inhibited by O-phenanthroline or EDTA. Its function is as follows. Involved in the biosynthesis of the common precursor of all benzylisoquinoline alkaloids such as morphine, sanguinarine, codeine or berberine. Condenses dopamine and pyruvic acid or 4-hydroxyphenylpyruvate. This is S-norcoclaurine synthase 2 (PR10A) from Coptis japonica (Japanese goldthread).